The chain runs to 85 residues: Large ribosomal subunit protein eL34 (85 aa).

The protein belongs to the eukaryotic ribosomal protein eL34 family.

This is Large ribosomal subunit protein eL34 from Saccharolobus islandicus (strain M.16.27) (Sulfolobus islandicus).